We begin with the raw amino-acid sequence, 180 residues long: ATP-dependent Clp protease proteolytic subunit 2 (180 aa).

Serine 86 acts as the Nucleophile in catalysis. Residue histidine 111 is part of the active site.

It belongs to the peptidase S14 family. Fourteen ClpP subunits assemble into 2 heptameric rings which stack back to back to give a disk-like structure with a central cavity, resembling the structure of eukaryotic proteasomes.

It localises to the cytoplasm. The enzyme catalyses Hydrolysis of proteins to small peptides in the presence of ATP and magnesium. alpha-casein is the usual test substrate. In the absence of ATP, only oligopeptides shorter than five residues are hydrolyzed (such as succinyl-Leu-Tyr-|-NHMec, and Leu-Tyr-Leu-|-Tyr-Trp, in which cleavage of the -Tyr-|-Leu- and -Tyr-|-Trp bonds also occurs).. Functionally, cleaves peptides in various proteins in a process that requires ATP hydrolysis. Has a chymotrypsin-like activity. Plays a major role in the degradation of misfolded proteins. The protein is ATP-dependent Clp protease proteolytic subunit 2 of Tropheryma whipplei (strain Twist) (Whipple's bacillus).